The primary structure comprises 212 residues: 3-isopropylmalate dehydratase small subunit (212 aa).

Belongs to the LeuD family. LeuD type 1 subfamily. As to quaternary structure, heterodimer of LeuC and LeuD.

It catalyses the reaction (2R,3S)-3-isopropylmalate = (2S)-2-isopropylmalate. It functions in the pathway amino-acid biosynthesis; L-leucine biosynthesis; L-leucine from 3-methyl-2-oxobutanoate: step 2/4. In terms of biological role, catalyzes the isomerization between 2-isopropylmalate and 3-isopropylmalate, via the formation of 2-isopropylmaleate. The chain is 3-isopropylmalate dehydratase small subunit from Nitrosomonas eutropha (strain DSM 101675 / C91 / Nm57).